Here is a 564-residue protein sequence, read N- to C-terminus: Rhodopsin kinase GRK1 (564 aa).

The tract at residues 1-15 (MDFGSLETVVANSAF) is interaction with RCVRN. The interval 1–189 (MDFGSLETVV…LEAQPIGEDW (189 aa)) is N-terminal. The residue at position 5 (Ser5) is a Phosphoserine. The residue at position 8 (Thr8) is a Phosphothreonine. Ser21 carries the post-translational modification Phosphoserine; by PKA and autocatalysis. The region spanning 58 to 175 (FDNLCSEQPI…LGSLYFLRFL (118 aa)) is the RGS domain. In terms of domain architecture, Protein kinase spans 190 to 455 (FLDFRVLGKG…CDALRANVLF (266 aa)). ATP contacts are provided by residues 196–204 (LGKGGFGEV) and Lys219. The active-site Proton acceptor is the Asp317. The region spanning 456–521 (KDISWRQLEA…GNCSIPWQEE (66 aa)) is the AGC-kinase C-terminal domain. Residues 456–564 (KDISWRQLEA…TAKSGMCLIS (109 aa)) are C-terminal. The residue at position 491 (Ser491) is a Phosphoserine; by autocatalysis. Thr492 carries the phosphothreonine; by autocatalysis modification. Residue Cys561 is modified to Cysteine methyl ester. A lipid anchor (S-farnesyl cysteine) is attached at Cys561. The propeptide at 562 to 564 (LIS) is removed in mature form.

It belongs to the protein kinase superfamily. AGC Ser/Thr protein kinase family. GPRK subfamily. In terms of assembly, interacts (via N-terminus) with RCVRN (via C-terminus); the interaction is Ca(2+)-dependent. Interacts (when prenylated) with PDE6D; this promotes release from membranes. May form a complex composed of RHO, GRK1 and RCVRN in a Ca(2+)-dependent manner; RCVRN prevents the interaction between GRK1 and RHO. In terms of processing, autophosphorylated, Ser-21 is a minor site of autophosphorylation compared to Ser-491 and Thr-492. Phosphorylation at Ser-21 is regulated by light and activated by cAMP. Post-translationally, farnesylation is required for full activity. Detected in retina (at protein level). Retina-specific. Expressed in rod and cone photoreceptor cells.

It localises to the membrane. It is found in the cell projection. The protein localises to the cilium. The protein resides in the photoreceptor outer segment. It carries out the reaction L-threonyl-[rhodopsin] + ATP = O-phospho-L-threonyl-[rhodopsin] + ADP + H(+). The catalysed reaction is L-seryl-[rhodopsin] + ATP = O-phospho-L-seryl-[rhodopsin] + ADP + H(+). Inhibited by RCVRN, which prevents the interaction between GRK1 and RHO. Inhibition is calcium-dependent. Functionally, retina-specific kinase involved in the signal turnoff via phosphorylation of rhodopsin (RHO), the G protein- coupled receptor that initiates the phototransduction cascade. This rapid desensitization is essential for scotopic vision and permits rapid adaptation to changes in illumination. May play a role in the maintenance of the outer nuclear layer in the retina. In Rattus norvegicus (Rat), this protein is Rhodopsin kinase GRK1.